The primary structure comprises 86 residues: Putative defensin-like protein 189 (86 aa).

Residues 1–28 (MKMAKSANEIGFITCLVVFLVLTGQSNG) form the signal peptide. 4 disulfides stabilise this stretch: Cys39–Cys85, Cys52–Cys71, Cys57–Cys80, and Cys61–Cys82.

This sequence belongs to the DEFL family.

It is found in the secreted. This chain is Putative defensin-like protein 189, found in Arabidopsis thaliana (Mouse-ear cress).